Reading from the N-terminus, the 105-residue chain is MTMMITTGNSFDGKVIKQCLGIVRGIVVRSPTISQGLMGGLKSIVGGKIGAYSQMCEHAREEAFQLMIEHAQALNANGIIAMRYDTGEIGQAGTEVLCYGTAVII.

The protein belongs to the UPF0145 family.

This is UPF0145 protein lpp0255 from Legionella pneumophila (strain Paris).